Here is a 130-residue protein sequence, read N- to C-terminus: Small ribosomal subunit protein uS11 (130 aa).

It belongs to the universal ribosomal protein uS11 family. Part of the 30S ribosomal subunit. Interacts with proteins S7 and S18. Binds to IF-3.

Its function is as follows. Located on the platform of the 30S subunit, it bridges several disparate RNA helices of the 16S rRNA. Forms part of the Shine-Dalgarno cleft in the 70S ribosome. The sequence is that of Small ribosomal subunit protein uS11 from Nitrobacter hamburgensis (strain DSM 10229 / NCIMB 13809 / X14).